A 278-amino-acid chain; its full sequence is 4-deoxy-L-threo-5-hexosulose-uronate ketol-isomerase (278 aa).

Zn(2+) contacts are provided by H196, H198, E203, and H245.

This sequence belongs to the KduI family. In terms of assembly, homohexamer. The cofactor is Zn(2+).

The catalysed reaction is 5-dehydro-4-deoxy-D-glucuronate = 3-deoxy-D-glycero-2,5-hexodiulosonate. Its pathway is glycan metabolism; pectin degradation; 2-dehydro-3-deoxy-D-gluconate from pectin: step 4/5. Catalyzes the isomerization of 5-dehydro-4-deoxy-D-glucuronate to 3-deoxy-D-glycero-2,5-hexodiulosonate. The protein is 4-deoxy-L-threo-5-hexosulose-uronate ketol-isomerase of Escherichia coli O127:H6 (strain E2348/69 / EPEC).